A 257-amino-acid chain; its full sequence is Protein KlaA (257 aa).

In terms of biological role, belongs to the kla operon, which is associated with cryptic tellurite resistance, and IncW plasmid fertility inhibition. The sequence is that of Protein KlaA (klaA) from Escherichia coli.